The following is a 356-amino-acid chain: 3-isopropylmalate dehydrogenase (356 aa).

Substrate contacts are provided by Arg-95, Arg-105, Arg-133, and Asp-223. 3 residues coordinate Mg(2+): Asp-223, Asp-247, and Asp-251. 281–293 (GSAPDIAGQNKAN) is a binding site for NAD(+).

The protein belongs to the isocitrate and isopropylmalate dehydrogenases family. LeuB type 1 subfamily. As to quaternary structure, homodimer. It depends on Mg(2+) as a cofactor. Requires Mn(2+) as cofactor.

The protein resides in the cytoplasm. The catalysed reaction is (2R,3S)-3-isopropylmalate + NAD(+) = 4-methyl-2-oxopentanoate + CO2 + NADH. It functions in the pathway amino-acid biosynthesis; L-leucine biosynthesis; L-leucine from 3-methyl-2-oxobutanoate: step 3/4. Its function is as follows. Catalyzes the oxidation of 3-carboxy-2-hydroxy-4-methylpentanoate (3-isopropylmalate) to 3-carboxy-4-methyl-2-oxopentanoate. The product decarboxylates to 4-methyl-2 oxopentanoate. This Neisseria meningitidis serogroup A / serotype 4A (strain DSM 15465 / Z2491) protein is 3-isopropylmalate dehydrogenase.